Here is a 128-residue protein sequence, read N- to C-terminus: Transcription antitermination protein NusB (128 aa).

Belongs to the NusB family.

Its function is as follows. Involved in transcription antitermination. Required for transcription of ribosomal RNA (rRNA) genes. Binds specifically to the boxA antiterminator sequence of the ribosomal RNA (rrn) operons. The protein is Transcription antitermination protein NusB of Listeria monocytogenes serotype 4a (strain HCC23).